A 382-amino-acid chain; its full sequence is D-galactonate dehydratase (382 aa).

D183 contributes to the Mg(2+) binding site. The active-site Proton donor is the H185. E209 and E235 together coordinate Mg(2+). H285 acts as the Proton acceptor in catalysis.

The protein belongs to the mandelate racemase/muconate lactonizing enzyme family. GalD subfamily. Mg(2+) serves as cofactor.

The catalysed reaction is D-galactonate = 2-dehydro-3-deoxy-D-galactonate + H2O. Its pathway is carbohydrate acid metabolism; D-galactonate degradation; D-glyceraldehyde 3-phosphate and pyruvate from D-galactonate: step 1/3. Functionally, catalyzes the dehydration of D-galactonate to 2-keto-3-deoxy-D-galactonate. In Ralstonia pickettii (strain 12J), this protein is D-galactonate dehydratase.